A 192-amino-acid polypeptide reads, in one-letter code: uncharacterized protein (192 aa).

Residues 29-160 (QRQAAVLIPV…PLDVYRRGNS (132 aa)) enclose the Nudix hydrolase domain. Positions 67–89 (GAVDSTDASLIAAALREAQEEVA) match the Nudix box motif. The Mg(2+) site is built by Glu-83 and Glu-87.

The protein belongs to the Nudix hydrolase family. PCD1 subfamily. Requires Mn(2+) as cofactor. Mg(2+) is required as a cofactor.

Its function is as follows. Probably mediates the hydrolysis of some nucleoside diphosphate derivatives. This is an uncharacterized protein from Salmonella newport (strain SL254).